We begin with the raw amino-acid sequence, 461 residues long: Protein-serine O-palmitoleoyltransferase porcupine (461 aa).

Residues methionine 1–cysteine 17 are Cytoplasmic-facing. The chain crosses the membrane as a helical span at residues leucine 18–alanine 38. Residues cysteine 39–histidine 66 lie on the Extracellular side of the membrane. A helical membrane pass occupies residues phenylalanine 67–phenylalanine 87. Residues leucine 88–arginine 95 lie on the Cytoplasmic side of the membrane. A helical transmembrane segment spans residues glycine 96–aspartate 116. The Extracellular portion of the chain corresponds to threonine 117–proline 152. The chain crosses the membrane as a helical span at residues valine 153–phenylalanine 173. Topologically, residues histidine 174 to alanine 198 are cytoplasmic. A helical transmembrane segment spans residues leucine 199 to isoleucine 219. Residues proline 220 to histidine 252 lie on the Extracellular side of the membrane. The helical transmembrane segment at phenylalanine 253–phenylalanine 273 threads the bilayer. The Cytoplasmic segment spans residues threonine 274–serine 337. Residues alanine 338–threonine 358 traverse the membrane as a helical segment. The active site involves histidine 341. Topologically, residues tyrosine 359–arginine 396 are extracellular. The chain crosses the membrane as a helical span at residues alanine 397–phenylalanine 417. The Cytoplasmic segment spans residues aspartate 418–glycine 461.

The protein belongs to the membrane-bound acyltransferase family. Porcupine subfamily. Interacts with WNT1, WNT3, WNT3A, WNT4, WNT5A, WNT5B, WNT6, WNT7A and WNT7B. As to expression, expressed in brain, heart, kidney, liver, lung, muscle, spleen and testis. Isoform 4 is strongly expressed in kidney, liver, lung, spleen and testis. Isoform 1 is strongly expressed in brain, heart and muscle and poorly in kidney, liver, lung, spleen and testis.

The protein localises to the endoplasmic reticulum membrane. It carries out the reaction [Wnt protein]-L-serine + (9Z)-hexadecenoyl-CoA = [Wnt protein]-O-(9Z)-hexadecenoyl-L-serine + CoA. In terms of biological role, protein-serine O-palmitoleoyltransferase that acts as a key regulator of the Wnt signaling pathway by mediating the attachment of palmitoleate, a 16-carbon monounsaturated fatty acid (C16:1(9Z)), to Wnt proteins. Serine palmitoleoylation of WNT proteins is required for efficient binding to frizzled receptors. The chain is Protein-serine O-palmitoleoyltransferase porcupine from Mus musculus (Mouse).